Reading from the N-terminus, the 239-residue chain is Leucyl/phenylalanyl-tRNA--protein transferase (239 aa).

Belongs to the L/F-transferase family.

The protein localises to the cytoplasm. It catalyses the reaction N-terminal L-lysyl-[protein] + L-leucyl-tRNA(Leu) = N-terminal L-leucyl-L-lysyl-[protein] + tRNA(Leu) + H(+). The catalysed reaction is N-terminal L-arginyl-[protein] + L-leucyl-tRNA(Leu) = N-terminal L-leucyl-L-arginyl-[protein] + tRNA(Leu) + H(+). The enzyme catalyses L-phenylalanyl-tRNA(Phe) + an N-terminal L-alpha-aminoacyl-[protein] = an N-terminal L-phenylalanyl-L-alpha-aminoacyl-[protein] + tRNA(Phe). Functionally, functions in the N-end rule pathway of protein degradation where it conjugates Leu, Phe and, less efficiently, Met from aminoacyl-tRNAs to the N-termini of proteins containing an N-terminal arginine or lysine. The chain is Leucyl/phenylalanyl-tRNA--protein transferase from Syntrophus aciditrophicus (strain SB).